The chain runs to 441 residues: Ribulose bisphosphate carboxylase large chain (441 aa).

K5 bears the N6,N6,N6-trimethyllysine mark. N114 and T164 together coordinate substrate. The active-site Proton acceptor is the K166. K168 lines the substrate pocket. Residues K192, D194, and E195 each contribute to the Mg(2+) site. N6-carboxylysine is present on K192. Catalysis depends on H285, which acts as the Proton acceptor. R286, H318, and S370 together coordinate substrate.

This sequence belongs to the RuBisCO large chain family. Type I subfamily. In terms of assembly, heterohexadecamer of 8 large chains and 8 small chains; disulfide-linked. The disulfide link is formed within the large subunit homodimers. It depends on Mg(2+) as a cofactor. The disulfide bond which can form in the large chain dimeric partners within the hexadecamer appears to be associated with oxidative stress and protein turnover.

Its subcellular location is the plastid. It localises to the chloroplast. It carries out the reaction 2 (2R)-3-phosphoglycerate + 2 H(+) = D-ribulose 1,5-bisphosphate + CO2 + H2O. It catalyses the reaction D-ribulose 1,5-bisphosphate + O2 = 2-phosphoglycolate + (2R)-3-phosphoglycerate + 2 H(+). In terms of biological role, ruBisCO catalyzes two reactions: the carboxylation of D-ribulose 1,5-bisphosphate, the primary event in carbon dioxide fixation, as well as the oxidative fragmentation of the pentose substrate in the photorespiration process. Both reactions occur simultaneously and in competition at the same active site. The protein is Ribulose bisphosphate carboxylase large chain of Argyrochosma delicatula (Delicate cloak fern).